A 157-amino-acid chain; its full sequence is Phosphopantetheine adenylyltransferase (157 aa).

Belongs to the eukaryotic CoaD family.

The protein resides in the cytoplasm. It carries out the reaction (R)-4'-phosphopantetheine + ATP + H(+) = 3'-dephospho-CoA + diphosphate. Its pathway is cofactor biosynthesis; coenzyme A biosynthesis. Functionally, reversibly transfers an adenylyl group from ATP to 4'-phosphopantetheine, yielding dephospho-CoA (dPCoA) and pyrophosphate. This Methanopyrus kandleri (strain AV19 / DSM 6324 / JCM 9639 / NBRC 100938) protein is Phosphopantetheine adenylyltransferase.